We begin with the raw amino-acid sequence, 1013 residues long: Probable beta-galactosidase B (1013 aa).

Positions 1–21 (MTRILNCLLVLLACLGVSSKA) are cleaved as a signal peptide. A substrate-binding site is contributed by tyrosine 90. Asparagine 100 carries an N-linked (GlcNAc...) asparagine glycan. Substrate is bound by residues asparagine 135, alanine 136, glutamate 137, and asparagine 195. The active-site Proton donor is the glutamate 196. Asparagine 211 carries N-linked (GlcNAc...) asparagine glycosylation. Tyrosine 265 provides a ligand contact to substrate. Cysteine 271 and cysteine 324 form a disulfide bridge. Catalysis depends on glutamate 308, which acts as the Nucleophile. Tyrosine 373 lines the substrate pocket. Residues asparagine 411, asparagine 442, asparagine 456, asparagine 626, asparagine 735, asparagine 768, and asparagine 775 are each glycosylated (N-linked (GlcNAc...) asparagine).

It belongs to the glycosyl hydrolase 35 family.

It is found in the secreted. The enzyme catalyses Hydrolysis of terminal non-reducing beta-D-galactose residues in beta-D-galactosides.. In terms of biological role, cleaves beta-linked terminal galactosyl residues from gangliosides, glycoproteins, and glycosaminoglycans. The sequence is that of Probable beta-galactosidase B (lacB) from Penicillium rubens (strain ATCC 28089 / DSM 1075 / NRRL 1951 / Wisconsin 54-1255) (Penicillium chrysogenum).